Here is a 2098-residue protein sequence, read N- to C-terminus: 1-phosphatidylinositol 3-phosphate 5-kinase (2098 aa).

Residues methionine 1–alanine 45 form a disordered region. Alanine 2 carries the N-acetylalanine modification. 2 positions are modified to phosphoserine; by autocatalysis: serine 23 and serine 48. The tract at residues lysine 57–arginine 123 is disordered. The segment covering glutamate 66–serine 88 has biased composition (polar residues). Serine 88 is subject to Phosphoserine. Residues aspartate 158–leucine 218 form an FYVE-type zinc finger. Cysteine 164, cysteine 167, cysteine 180, cysteine 183, cysteine 188, cysteine 191, cysteine 210, and cysteine 213 together coordinate Zn(2+). The interval valine 292–serine 329 is disordered. Residues serine 299, serine 307, and serine 312 each carry the phosphoserine modification. Polar residues predominate over residues arginine 302–arginine 315. Residue serine 318 is modified to Phosphoserine; by PKB/AKT1 or PKB/AKT2. Serine 329 is subject to Phosphoserine. Residues histidine 365–glutamine 440 form the DEP domain. Polar residues predominate over residues threonine 442–glutamate 459. The disordered stretch occupies residues threonine 442–aspartate 469. The span at glycine 460–aspartate 469 shows a compositional bias: basic and acidic residues. Serine 475 is subject to Phosphoserine. Residues glycine 484–serine 505 form a disordered region. The segment covering leucine 488–serine 505 has biased composition (polar residues). The tract at residues methionine 616–leucine 868 is chaperonin-like domain. Disordered stretches follow at residues arginine 1161 to aspartate 1191 and phenylalanine 1512 to serine 1616. The segment covering serine 1177 to serine 1186 has biased composition (low complexity). Serine 1522 is subject to Phosphoserine; by autocatalysis. 2 positions are modified to phosphoserine: serine 1544 and serine 1549. Low complexity predominate over residues leucine 1562–leucine 1578. At serine 1669 the chain carries Phosphoserine; by autocatalysis. Positions glutamine 1692 to threonine 1799 are disordered. Low complexity predominate over residues serine 1704–serine 1714. Polar residues predominate over residues glycine 1723 to glutamine 1735. Position 1754 is a phosphoserine (serine 1754). A PIPK domain is found at serine 1758–phenylalanine 2084. The catalytic stretch occupies residues glutamate 1842 to cysteine 2098. 2 positions are modified to phosphoserine; by autocatalysis: serine 1969 and serine 2053.

Component of the PI(3,5)P2 regulatory complex/PAS complex, at least composed of PIKFYVE, FIG4 and VAC14. VAC14 nucleates the assembly of the complex and serves as a scaffold by pentamerizing into a star-shaped structure, which can bind a single copy each of PIKFYVE and FIG4 and coordinates their activities. Interacts (via chaperonin-like domain) with RABEPK; the interaction recruits RABEPK to the endosomal membrane. Interacts with SPAG9. Interacts with EGFR. Autophosphorylates which inhibits its own phosphatidylinositol 3-phosphate 5-kinase activity, stimulates FIG4 lipid phosphatase activity and down-regulates lipid product formation. Dephosphorylated by FIG4 in the PI(3,5)P2 regulatory complex, at Ser-48, Ser-1669 and Ser-2053. Phosphorylated in response to insulin at Ser-318 in a protein kinase B (PKB)-dependent manner.

It localises to the endosome membrane. It is found in the early endosome membrane. The protein localises to the cytoplasmic vesicle. Its subcellular location is the phagosome membrane. The protein resides in the late endosome membrane. It catalyses the reaction a 1,2-diacyl-sn-glycero-3-phospho-(1D-myo-inositol-3-phosphate) + ATP = a 1,2-diacyl-sn-glycero-3-phospho-(1D-myo-inositol-3,5-bisphosphate) + ADP + H(+). It carries out the reaction a 1,2-diacyl-sn-glycero-3-phospho-(1D-myo-inositol) + ATP = a 1,2-diacyl-sn-glycero-3-phospho-(1D-myo-inositol-5-phosphate) + ADP + H(+). The catalysed reaction is L-seryl-[protein] + ATP = O-phospho-L-seryl-[protein] + ADP + H(+). Inhibited by apilimod and YM201636. In terms of biological role, dual specificity kinase implicated in myriad essential cellular processes such as maintenance of endomembrane homeostasis, and endocytic-vacuolar pathway, lysosomal trafficking, nuclear transport, stress- or hormone-induced signaling and cell cycle progression. The PI(3,5)P2 regulatory complex regulates both the synthesis and turnover of phosphatidylinositol 3,5-bisphosphate (PtdIns(3,5)P2). Sole enzyme to catalyze the phosphorylation of phosphatidylinositol 3-phosphate on the fifth hydroxyl of the myo-inositol ring, to form (PtdIns(3,5)P2). Also catalyzes the phosphorylation of phosphatidylinositol on the fifth hydroxyl of the myo-inositol ring, to form phosphatidylinositol 5-phosphate (PtdIns(5)P). Has serine-protein kinase activity and is able to autophosphorylate and transphosphorylate. Autophosphorylation inhibits its own phosphatidylinositol 3-phosphate 5-kinase activity, stimulates FIG4 lipid phosphatase activity and down-regulates lipid product formation. Involved in key endosome operations such as fission and fusion in the course of endosomal cargo transport. Required for the maturation of early into late endosomes, phagosomes and lysosomes. Regulates vacuole maturation and nutrient recovery following engulfment of macromolecules, initiates the redistribution of accumulated lysosomal contents back into the endosome network. Critical regulator of the morphology, degradative activity, and protein turnover of the endolysosomal system in macrophages and platelets. In neutrophils, critical to perform chemotaxis, generate ROS, and undertake phagosome fusion with lysosomes. Plays a key role in the processing and presentation of antigens by major histocompatibility complex class II (MHC class II) mediated by CTSS. Regulates melanosome biogenesis by controlling the delivery of proteins from the endosomal compartment to the melanosome. Essential for systemic glucose homeostasis, mediates insulin-induced signals for endosome/actin remodeling in the course of GLUT4 translocation/glucose uptake activation. Supports microtubule-based endosome-to-trans-Golgi network cargo transport, through association with SPAG9 and RABEPK. Mediates EGFR trafficking to the nucleus. Functionally, (Microbial infection) Required for cell entry of coronaviruses SARS-CoV and SARS-CoV-2, as well as human coronavirus EMC (HCoV-EMC) by endocytosis. The protein is 1-phosphatidylinositol 3-phosphate 5-kinase of Homo sapiens (Human).